Consider the following 369-residue polypeptide: Peptide chain release factor subunit 1 (369 aa).

The protein belongs to the eukaryotic release factor 1 family. Heterodimer of two subunits, one of which binds GTP.

Its subcellular location is the cytoplasm. Directs the termination of nascent peptide synthesis (translation) in response to the termination codons UAA, UAG and UGA. The polypeptide is Peptide chain release factor subunit 1 (prf1) (Saccharolobus solfataricus (strain ATCC 35092 / DSM 1617 / JCM 11322 / P2) (Sulfolobus solfataricus)).